We begin with the raw amino-acid sequence, 140 residues long: Putative pre-16S rRNA nuclease (140 aa).

It belongs to the YqgF nuclease family.

It localises to the cytoplasm. In terms of biological role, could be a nuclease involved in processing of the 5'-end of pre-16S rRNA. The chain is Putative pre-16S rRNA nuclease from Serratia proteamaculans (strain 568).